A 138-amino-acid chain; its full sequence is Large ribosomal subunit protein bL17 (138 aa).

It belongs to the bacterial ribosomal protein bL17 family. As to quaternary structure, part of the 50S ribosomal subunit. Contacts protein L32.

This chain is Large ribosomal subunit protein bL17, found in Dinoroseobacter shibae (strain DSM 16493 / NCIMB 14021 / DFL 12).